We begin with the raw amino-acid sequence, 226 residues long: Neuron-specific vesicular protein calcyon (226 aa).

Residues 1–21 are disordered; sequence MVKLGCSFSGKPGKEAGDQDG. Over 1-88 the chain is Extracellular; the sequence is MVKLGCSFSG…EEGRRLPTAR (88 aa). A helical membrane pass occupies residues 89–109; that stretch reads MIAFAMALLGCVLIMYKAIWY. Residues 110–226 lie on the Cytoplasmic side of the membrane; that stretch reads DQFTCPDGFL…AEGVPSQPPK (117 aa). The interval 177 to 226 is disordered; sequence HKGTTPAAMAVSTAAAAAAAEGTEPSGKSLDTREKEDPQKAEGVPSQPPK. Positions 183 to 196 are enriched in low complexity; it reads AAMAVSTAAAAAAA. Positions 206-216 are enriched in basic and acidic residues; sequence LDTREKEDPQK.

This sequence belongs to the NSG family. As to quaternary structure, interacts with CLTA. In terms of tissue distribution, most abundant in brain. Also expressed in testis and ovary and, at much lower levels, in kidney and heart.

The protein localises to the cytoplasmic vesicle membrane. It is found in the cell membrane. Its function is as follows. Interacts with clathrin light chain A and stimulates clathrin self-assembly and clathrin-mediated endocytosis. In Mus musculus (Mouse), this protein is Neuron-specific vesicular protein calcyon (Caly).